Reading from the N-terminus, the 209-residue chain is Large ribosomal subunit protein uL3 (209 aa).

The disordered stretch occupies residues 129–153 (SRGPMSHGSKFHRAPGSMGAASDPS).

This sequence belongs to the universal ribosomal protein uL3 family. As to quaternary structure, part of the 50S ribosomal subunit. Forms a cluster with proteins L14 and L19.

One of the primary rRNA binding proteins, it binds directly near the 3'-end of the 23S rRNA, where it nucleates assembly of the 50S subunit. In Clostridium perfringens (strain 13 / Type A), this protein is Large ribosomal subunit protein uL3.